We begin with the raw amino-acid sequence, 156 residues long: Nascent polypeptide-associated complex subunit beta (156 aa).

Disordered regions lie at residues 1–42 (MPID…KDDT) and 129–156 (QANE…AEVE). An NAC-A/B domain is found at 38-103 (NKDDTKLHNQ…AQEKNLQELF (66 aa)).

The protein belongs to the NAC-beta family. In terms of assembly, part of the nascent polypeptide-associated complex (NAC), consisting of EGD2 and EGD1. NAC associates with ribosomes via EGD1.

The protein resides in the cytoplasm. The protein localises to the nucleus. Functionally, component of the nascent polypeptide-associated complex (NAC), a dynamic component of the ribosomal exit tunnel, protecting the emerging polypeptides from interaction with other cytoplasmic proteins to ensure appropriate nascent protein targeting. The NAC complex also promotes mitochondrial protein import by enhancing productive ribosome interactions with the outer mitochondrial membrane and blocks the inappropriate interaction of ribosomes translating non-secretory nascent polypeptides with translocation sites in the membrane of the endoplasmic reticulum. EGD1 may act as a transcription factor that exert a negative effect on the expression of several genes that are transcribed by RNA polymerase II. The protein is Nascent polypeptide-associated complex subunit beta (EGD1) of Candida glabrata (strain ATCC 2001 / BCRC 20586 / JCM 3761 / NBRC 0622 / NRRL Y-65 / CBS 138) (Yeast).